The chain runs to 148 residues: Snaclec B9 (148 aa).

An N-terminal signal peptide occupies residues 1–24 (MGRFIFVSFGLLVVFLSLSGTGAA). 3 disulfide bridges follow: Cys27–Cys38, Cys55–Cys144, and Cys121–Cys136. The 112-residue stretch at 34–145 (YDQHCYKVFD…CRLLGHFVCK (112 aa)) folds into the C-type lectin domain. Asn57 and Asn60 each carry an N-linked (GlcNAc...) asparagine glycan.

This sequence belongs to the snaclec family. As to quaternary structure, heterodimer; disulfide-linked. Expressed by the venom gland.

It localises to the secreted. In terms of biological role, interferes with one step of hemostasis (modulation of platelet aggregation, or coagulation cascade, for example). This chain is Snaclec B9, found in Macrovipera lebetinus (Levantine viper).